Here is a 407-residue protein sequence, read N- to C-terminus: Imidazolonepropionase (407 aa).

Fe(3+) contacts are provided by H68 and H70. Zn(2+) contacts are provided by H68 and H70. 4-imidazolone-5-propanoate contacts are provided by R77, Y140, and H173. Y140 lines the N-formimidoyl-L-glutamate pocket. H238 lines the Fe(3+) pocket. H238 serves as a coordination point for Zn(2+). Q241 lines the 4-imidazolone-5-propanoate pocket. D313 lines the Fe(3+) pocket. Zn(2+) is bound at residue D313. Residues N315 and G317 each contribute to the N-formimidoyl-L-glutamate site. Position 318 (T318) interacts with 4-imidazolone-5-propanoate.

The protein belongs to the metallo-dependent hydrolases superfamily. HutI family. Requires Zn(2+) as cofactor. Fe(3+) serves as cofactor.

The protein resides in the cytoplasm. The enzyme catalyses 4-imidazolone-5-propanoate + H2O = N-formimidoyl-L-glutamate. It functions in the pathway amino-acid degradation; L-histidine degradation into L-glutamate; N-formimidoyl-L-glutamate from L-histidine: step 3/3. Functionally, catalyzes the hydrolytic cleavage of the carbon-nitrogen bond in imidazolone-5-propanoate to yield N-formimidoyl-L-glutamate. It is the third step in the universal histidine degradation pathway. This Burkholderia ambifaria (strain ATCC BAA-244 / DSM 16087 / CCUG 44356 / LMG 19182 / AMMD) (Burkholderia cepacia (strain AMMD)) protein is Imidazolonepropionase.